A 152-amino-acid chain; its full sequence is Ribosome maturation factor RimP (152 aa).

This sequence belongs to the RimP family.

It is found in the cytoplasm. Functionally, required for maturation of 30S ribosomal subunits. This Salmonella arizonae (strain ATCC BAA-731 / CDC346-86 / RSK2980) protein is Ribosome maturation factor RimP.